Here is a 385-residue protein sequence, read N- to C-terminus: Xanthosine methyltransferase 2 (385 aa).

Residue Tyr18 coordinates S-adenosyl-L-homocysteine. The xanthosine site is built by Asn21 and Asn25. 7 residues coordinate S-adenosyl-L-homocysteine: Cys62, Asn67, Asp101, Leu102, Ser140, Phe141, and Cys157. Tyr158 is a xanthosine binding site. S-adenosyl-L-homocysteine is bound at residue Cys159. Positions 161 and 162 each coordinate xanthosine. Residues Asn179, Asp261, Phe263, and Asn264 each contribute to the Mg(2+) site. 3 residues coordinate xanthosine: Ser329, Tyr334, and Tyr369.

It belongs to the methyltransferase superfamily. Type-7 methyltransferase family. It depends on Mg(2+) as a cofactor. As to expression, expressed at low levels in young leaves but not in mature leaves. Barely detectable in fruits (grains).

It catalyses the reaction xanthosine + S-adenosyl-L-methionine = 7-methylxanthosine + S-adenosyl-L-homocysteine. The protein operates within alkaloid biosynthesis. Involved in the biosynthesis of caffeine. Specific for xanthosine and could not use xanthosine 5'-monophosphate (XMP) as substrate. Catalyzes the 7-N-methylation activity of xanthosine, but does not have 1-N- or 3-N-methylation activity. In Coffea arabica (Arabian coffee), this protein is Xanthosine methyltransferase 2.